The primary structure comprises 97 residues: Aspartyl/glutamyl-tRNA(Asn/Gln) amidotransferase subunit C (97 aa).

The protein belongs to the GatC family. Heterotrimer of A, B and C subunits.

It carries out the reaction L-glutamyl-tRNA(Gln) + L-glutamine + ATP + H2O = L-glutaminyl-tRNA(Gln) + L-glutamate + ADP + phosphate + H(+). The enzyme catalyses L-aspartyl-tRNA(Asn) + L-glutamine + ATP + H2O = L-asparaginyl-tRNA(Asn) + L-glutamate + ADP + phosphate + 2 H(+). Functionally, allows the formation of correctly charged Asn-tRNA(Asn) or Gln-tRNA(Gln) through the transamidation of misacylated Asp-tRNA(Asn) or Glu-tRNA(Gln) in organisms which lack either or both of asparaginyl-tRNA or glutaminyl-tRNA synthetases. The reaction takes place in the presence of glutamine and ATP through an activated phospho-Asp-tRNA(Asn) or phospho-Glu-tRNA(Gln). The sequence is that of Aspartyl/glutamyl-tRNA(Asn/Gln) amidotransferase subunit C from Prochlorococcus marinus (strain SARG / CCMP1375 / SS120).